A 185-amino-acid chain; its full sequence is Elongation factor P (185 aa).

This sequence belongs to the elongation factor P family.

It is found in the cytoplasm. Its pathway is protein biosynthesis; polypeptide chain elongation. In terms of biological role, involved in peptide bond synthesis. Stimulates efficient translation and peptide-bond synthesis on native or reconstituted 70S ribosomes in vitro. Probably functions indirectly by altering the affinity of the ribosome for aminoacyl-tRNA, thus increasing their reactivity as acceptors for peptidyl transferase. This Synechococcus elongatus (strain ATCC 33912 / PCC 7942 / FACHB-805) (Anacystis nidulans R2) protein is Elongation factor P (efp).